The sequence spans 255 residues: 4-hydroxy-tetrahydrodipicolinate reductase (255 aa).

Residues 8–13 (GANGRV), 88–90 (GTT), and 112–115 (ATNM) each bind NAD(+). Residue His144 is the Proton donor/acceptor of the active site. His145 provides a ligand contact to (S)-2,3,4,5-tetrahydrodipicolinate. Lys148 (proton donor) is an active-site residue. 154 to 155 (GT) is a binding site for (S)-2,3,4,5-tetrahydrodipicolinate.

The protein belongs to the DapB family.

Its subcellular location is the cytoplasm. It catalyses the reaction (S)-2,3,4,5-tetrahydrodipicolinate + NAD(+) + H2O = (2S,4S)-4-hydroxy-2,3,4,5-tetrahydrodipicolinate + NADH + H(+). The enzyme catalyses (S)-2,3,4,5-tetrahydrodipicolinate + NADP(+) + H2O = (2S,4S)-4-hydroxy-2,3,4,5-tetrahydrodipicolinate + NADPH + H(+). The protein operates within amino-acid biosynthesis; L-lysine biosynthesis via DAP pathway; (S)-tetrahydrodipicolinate from L-aspartate: step 4/4. In terms of biological role, catalyzes the conversion of 4-hydroxy-tetrahydrodipicolinate (HTPA) to tetrahydrodipicolinate. The sequence is that of 4-hydroxy-tetrahydrodipicolinate reductase from Sulfurimonas denitrificans (strain ATCC 33889 / DSM 1251) (Thiomicrospira denitrificans (strain ATCC 33889 / DSM 1251)).